Consider the following 355-residue polypeptide: MESIFHEKQEGSLCAQHCLNNLLQGEYFSPVELSSIAHQLDEEERLRMAEGGVTSEDYRTFLQQPSGNMDDSGFFSIQVISNALKVWGLELILFNSPEYQRLRIDPINERSFICNYKEHWFTVRKLGKQWFNLNSLLTGPELISDTYLALFLAQLQQEGYSIFVVKGDLPDCEADQLLQMIKVQQMHRPKLIGEELAHLKEQSALKADLERVLEAADGPGMFDDDEDDLQRALAMSRQEIDMEDEEADLRRAIQLSMQGSSRGMCEDSPQTSSTDLSSEELRKRREAYFEKQQHQQQEADRPGYLSYPCERPTTSSGGLRSNQAGNAMSEEDVLRATVTVSLETAKDSLKAERKK.

A Peptide (Met-Gly) (interchain with G-Cter in ubiquitin) cross-link involves residue methionine 1. Positions 1 to 180 (MESIFHEKQE…DCEADQLLQM (180 aa)) constitute a Josephin domain. The Nucleophile role is filled by cysteine 14. Catalysis depends on histidine 119, which acts as the Proton acceptor. Residue asparagine 134 is part of the active site. Lysine 200 participates in a covalent cross-link: Glycyl lysine isopeptide (Lys-Gly) (interchain with G-Cter in ubiquitin). UIM domains follow at residues 224–243 (DDEDDLQRALAMSRQEIDME) and 244–263 (DEEADLRRAIQLSMQGSSRG). The interval 257 to 333 (MQGSSRGMCE…AGNAMSEEDV (77 aa)) is disordered. Phosphoserine occurs at positions 268, 272, and 273. The span at 279-301 (EELRKRREAYFEKQQHQQQEADR) shows a compositional bias: basic and acidic residues. Polar residues predominate over residues 312–326 (PTTSSGGLRSNQAGN). Phosphoserine is present on serine 321. The region spanning 329-348 (SEEDVLRATVTVSLETAKDS) is the UIM 3 domain.

As to quaternary structure, interacts with STUB1/CHIP (when monoubiquitinated). Interacts with DNA repair proteins RAD23A and RAD23B. Interacts with BECN1 (via its poly-Gln domain). Interacts with PRKN, UBR2, VCP and tubulin. Monoubiquitinated by UBE2W, possibly leading to activate the deubiquitinating enzyme activity. As to expression, ubiquitously expressed.

The protein resides in the nucleus matrix. The protein localises to the nucleus. Its subcellular location is the lysosome membrane. The catalysed reaction is Thiol-dependent hydrolysis of ester, thioester, amide, peptide and isopeptide bonds formed by the C-terminal Gly of ubiquitin (a 76-residue protein attached to proteins as an intracellular targeting signal).. Functionally, deubiquitinating enzyme involved in protein homeostasis maintenance, transcription, cytoskeleton regulation, myogenesis and degradation of misfolded chaperone substrates. Binds long polyubiquitin chains and trims them, while it has weak or no activity against chains of 4 or less ubiquitins. Involved in degradation of misfolded chaperone substrates via its interaction with STUB1/CHIP: recruited to monoubiquitinated STUB1/CHIP, and restricts the length of ubiquitin chain attached to STUB1/CHIP substrates and preventing further chain extension. Interacts with key regulators of transcription and represses transcription: acts as a histone-binding protein that regulates transcription. Acts as a negative regulator of mTORC1 signaling in response to amino acid deprivation by mediating deubiquitination of RHEB, thereby promoting RHEB inactivation by the TSC-TBC complex. Regulates autophagy via the deubiquitination of 'Lys-402' of BECN1 leading to the stabilization of BECN1. This chain is Ataxin-3 (Atxn3), found in Rattus norvegicus (Rat).